Here is a 194-residue protein sequence, read N- to C-terminus: Fatty acid metabolism regulator protein (194 aa).

In terms of domain architecture, HTH tetR-type spans 5–65 (RPKYMQIIDA…SLFKEKMGQF (61 aa)). Positions 28 to 47 (QVSKIAKQAGVADGTIYLYF) form a DNA-binding region, H-T-H motif.

As to quaternary structure, homodimer. Binds to DNA.

Its subcellular location is the cytoplasm. Its function is as follows. Transcriptional regulator in fatty acid degradation. Represses transcription of genes required for fatty acid transport and beta-oxidation, including acdA, fadA, fadB, fadE, fadF, fadG, fadH, fadM, fadN, lcfA and lcfB. Binding of FadR to DNA is specifically inhibited by long chain fatty acyl-CoA compounds of 14-20 carbon atoms in length. In Bacillus subtilis (strain 168), this protein is Fatty acid metabolism regulator protein (fadR).